A 322-amino-acid chain; its full sequence is Cytochrome c biogenesis protein CcsA (322 aa).

The next 8 helical transmembrane spans lie at 9–29 (ILTH…LITL), 44–64 (GMIA…IYSG), 71–91 (LYES…VPYF), 98–118 (LTTI…SGLL), 143–163 (MILS…LLVI), 226–246 (VISL…VWAN), 253–273 (WSWD…AIYL), and 287–307 (AIVA…VNLL).

This sequence belongs to the CcmF/CycK/Ccl1/NrfE/CcsA family. In terms of assembly, may interact with Ccs1.

Its subcellular location is the plastid. It localises to the chloroplast thylakoid membrane. Functionally, required during biogenesis of c-type cytochromes (cytochrome c6 and cytochrome f) at the step of heme attachment. This is Cytochrome c biogenesis protein CcsA from Guizotia abyssinica (Niger).